The following is a 179-amino-acid chain: Large ribosomal subunit protein uL5 (179 aa).

Belongs to the universal ribosomal protein uL5 family. As to quaternary structure, part of the 50S ribosomal subunit; part of the 5S rRNA/L5/L18/L25 subcomplex. Contacts the 5S rRNA and the P site tRNA. Forms a bridge to the 30S subunit in the 70S ribosome.

This is one of the proteins that bind and probably mediate the attachment of the 5S RNA into the large ribosomal subunit, where it forms part of the central protuberance. In the 70S ribosome it contacts protein S13 of the 30S subunit (bridge B1b), connecting the 2 subunits; this bridge is implicated in subunit movement. Contacts the P site tRNA; the 5S rRNA and some of its associated proteins might help stabilize positioning of ribosome-bound tRNAs. This is Large ribosomal subunit protein uL5 from Halothermothrix orenii (strain H 168 / OCM 544 / DSM 9562).